We begin with the raw amino-acid sequence, 219 residues long: Protein-L-isoaspartate O-methyltransferase (219 aa).

S65 is a catalytic residue.

The protein belongs to the methyltransferase superfamily. L-isoaspartyl/D-aspartyl protein methyltransferase family. In terms of assembly, monomer.

Its subcellular location is the cytoplasm. It catalyses the reaction [protein]-L-isoaspartate + S-adenosyl-L-methionine = [protein]-L-isoaspartate alpha-methyl ester + S-adenosyl-L-homocysteine. Its function is as follows. Catalyzes the methyl esterification of L-isoaspartyl residues in peptides and proteins that result from spontaneous decomposition of normal L-aspartyl and L-asparaginyl residues. It plays a role in the repair and/or degradation of damaged proteins. This chain is Protein-L-isoaspartate O-methyltransferase (pcm), found in Pyrococcus furiosus (strain ATCC 43587 / DSM 3638 / JCM 8422 / Vc1).